The primary structure comprises 145 residues: uncharacterized protein (145 aa).

The chain crosses the membrane as a helical span at residues 46-66 (FFFLFFLFFFFFFTFQFLVAF).

Its subcellular location is the membrane. This is an uncharacterized protein from Saccharomyces cerevisiae (strain ATCC 204508 / S288c) (Baker's yeast).